The following is a 485-amino-acid chain: Glutamyl-tRNA(Gln) amidotransferase subunit A (485 aa).

Catalysis depends on charge relay system residues Lys-76 and Ser-151. Ser-175 serves as the catalytic Acyl-ester intermediate.

It belongs to the amidase family. GatA subfamily. As to quaternary structure, heterotrimer of A, B and C subunits.

The enzyme catalyses L-glutamyl-tRNA(Gln) + L-glutamine + ATP + H2O = L-glutaminyl-tRNA(Gln) + L-glutamate + ADP + phosphate + H(+). Functionally, allows the formation of correctly charged Gln-tRNA(Gln) through the transamidation of misacylated Glu-tRNA(Gln) in organisms which lack glutaminyl-tRNA synthetase. The reaction takes place in the presence of glutamine and ATP through an activated gamma-phospho-Glu-tRNA(Gln). In Methylococcus capsulatus (strain ATCC 33009 / NCIMB 11132 / Bath), this protein is Glutamyl-tRNA(Gln) amidotransferase subunit A.